An 871-amino-acid chain; its full sequence is Zinc finger protein 473 (871 aa).

Residues 6–75 enclose the KRAB domain; it reads VTLKDVGMDF…AGGSPEATSP (70 aa). Disordered regions lie at residues 47–81 and 140–164; these read PPRPNLTSHPDGSEDLEPLAGGSPEATSPDVTETK and NGESPTECKSHELKRGLSPVSTVST. Residues 71–81 show a composition bias toward polar residues; it reads EATSPDVTETK. Over residues 145 to 154 the composition is skewed to basic and acidic residues; the sequence is TECKSHELKR. Lys148 is covalently cross-linked (Glycyl lysine isopeptide (Lys-Gly) (interchain with G-Cter in SUMO2)). The C2H2-type 1 zinc-finger motif lies at 209–231; sequence YQCSECGKSFSGSYRLTQHWITH. The C2H2-type 2; degenerate zinc finger occupies 265–286; that stretch reads YVCNEYGTTFSQSTYLWHQKTH. A compositionally biased stretch (basic and acidic residues) spans 290–317; sequence KPCKSQDSDHPPSHDTQPGEHQKTHTDS. Residues 290 to 318 are disordered; sequence KPCKSQDSDHPPSHDTQPGEHQKTHTDSK. The interaction with SLBP/pre-mRNA complex stretch occupies residues 312 to 552; that stretch reads KTHTDSKSYN…GFFVSGKILD (241 aa). 3 C2H2-type zinc fingers span residues 320 to 342, 347 to 369, and 375 to 397; these read YNCNECGKAFTRIFHLTRHQKIH, YECSKCQATFNLRKHLIQHQKTH, and SECQECGKIFRHSSLLIEHQALH. The segment at 403–425 adopts a C2H2-type 6; degenerate zinc-finger fold; that stretch reads YKCNERGKSFRHNSTLKIHQRVH. Residue Lys419 forms a Glycyl lysine isopeptide (Lys-Gly) (interchain with G-Cter in SUMO2) linkage. C2H2-type zinc fingers lie at residues 431–453, 459–481, 487–509, and 515–537; these read YKCSECGKAFHRHTHLNEHRRIH, HKCQECVRSFSRPSHLMRHQAIH, YSCAECKETFSDNNRLVQHQKMH, and YECQECGERFICGSTLKCHESVH. Glycyl lysine isopeptide (Lys-Gly) (interchain with G-Cter in SUMO2) cross-links involve residues Lys549 and Lys558. 2 consecutive C2H2-type zinc fingers follow at residues 562–584 and 591–613; these read FKCNKCEKTFSCSKYLTQHERIH and FECDQCGKAFGQSTRLIHHQRIH. Lys635 is covalently cross-linked (Glycyl lysine isopeptide (Lys-Gly) (interchain with G-Cter in SUMO2)). C2H2-type zinc fingers lie at residues 646–668, 674–696, 702–724, 730–752, 758–780, 786–808, 814–836, and 842–864; these read FKCNECGKTFSHSAHLSKHQLIH, FKCSKCDRVFTQRNYLVQHERTH, LVCNECGKTFRQSSCLSKHQRIH, YVCDYCGKAFGLSAELVRHQRIH, YVCQECGKAFTQSSCLSIHRRVH, YRCGECGKAFAQKANLTQHQRIH, YSCNVCGKAFVLSAHLNQHLRVH, and YQCQRCQKAFRCHSSLSRHQRVH.

It belongs to the krueppel C2H2-type zinc-finger protein family. In terms of assembly, interacts with the SLBP/pre-mRNA complex but not with SLBP alone. Interacts with LSM11 in a U7 snRNP-dependent manner.

It is found in the nucleus. Its function is as follows. Involved in histone 3'-end pre-mRNA processing by associating with U7 snRNP and interacting with SLBP/pre-mRNA complex. Increases histone 3'-end pre-mRNA processing but has no effect on U7 snRNP levels, when overexpressed. Required for cell cycle progression from G1 to S phases. In Homo sapiens (Human), this protein is Zinc finger protein 473 (ZNF473).